Consider the following 306-residue polypeptide: UDP-3-O-acyl-N-acetylglucosamine deacetylase (306 aa).

Zn(2+)-binding residues include His79, His238, and Asp242. The active-site Proton donor is the His265.

The protein belongs to the LpxC family. It depends on Zn(2+) as a cofactor.

The enzyme catalyses a UDP-3-O-[(3R)-3-hydroxyacyl]-N-acetyl-alpha-D-glucosamine + H2O = a UDP-3-O-[(3R)-3-hydroxyacyl]-alpha-D-glucosamine + acetate. It participates in glycolipid biosynthesis; lipid IV(A) biosynthesis; lipid IV(A) from (3R)-3-hydroxytetradecanoyl-[acyl-carrier-protein] and UDP-N-acetyl-alpha-D-glucosamine: step 2/6. Its function is as follows. Catalyzes the hydrolysis of UDP-3-O-myristoyl-N-acetylglucosamine to form UDP-3-O-myristoylglucosamine and acetate, the committed step in lipid A biosynthesis. This chain is UDP-3-O-acyl-N-acetylglucosamine deacetylase, found in Shewanella halifaxensis (strain HAW-EB4).